We begin with the raw amino-acid sequence, 469 residues long: Signal recognition particle 54 kDa protein (469 aa).

Residues 104–111 (GLYGSGKT), 184–188 (DTAGR), and 242–245 (TKLD) each bind GTP. Disordered regions lie at residues 388–410 (ELENPRVVGQSRTKRICRGSGKP) and 447–469 (QQGGGGGGGMGGMGGGGMGPFGD). Gly residues predominate over residues 448-469 (QGGGGGGGMGGMGGGGMGPFGD).

Belongs to the GTP-binding SRP family. SRP54 subfamily. Part of the signal recognition particle protein translocation system, which is composed of SRP and FtsY. Archaeal SRP consists of a 7S RNA molecule of 300 nucleotides and two protein subunits: SRP54 and SRP19.

It is found in the cytoplasm. It catalyses the reaction GTP + H2O = GDP + phosphate + H(+). Its function is as follows. Involved in targeting and insertion of nascent membrane proteins into the cytoplasmic membrane. Binds to the hydrophobic signal sequence of the ribosome-nascent chain (RNC) as it emerges from the ribosomes. The SRP-RNC complex is then targeted to the cytoplasmic membrane where it interacts with the SRP receptor FtsY. The chain is Signal recognition particle 54 kDa protein from Haloarcula marismortui (strain ATCC 43049 / DSM 3752 / JCM 8966 / VKM B-1809) (Halobacterium marismortui).